The sequence spans 191 residues: Elongation factor P 1 (191 aa).

This sequence belongs to the elongation factor P family.

It localises to the cytoplasm. The protein operates within protein biosynthesis; polypeptide chain elongation. Functionally, involved in peptide bond synthesis. Stimulates efficient translation and peptide-bond synthesis on native or reconstituted 70S ribosomes in vitro. Probably functions indirectly by altering the affinity of the ribosome for aminoacyl-tRNA, thus increasing their reactivity as acceptors for peptidyl transferase. The sequence is that of Elongation factor P 1 from Lactobacillus acidophilus (strain ATCC 700396 / NCK56 / N2 / NCFM).